Reading from the N-terminus, the 158-residue chain is Ribosome maturation factor RimP (158 aa).

Belongs to the RimP family.

It localises to the cytoplasm. Its function is as follows. Required for maturation of 30S ribosomal subunits. The chain is Ribosome maturation factor RimP from Lactobacillus delbrueckii subsp. bulgaricus (strain ATCC 11842 / DSM 20081 / BCRC 10696 / JCM 1002 / NBRC 13953 / NCIMB 11778 / NCTC 12712 / WDCM 00102 / Lb 14).